A 630-amino-acid chain; its full sequence is Membrane protein insertase YidC (630 aa).

Helical transmembrane passes span 10 to 30 (LMFL…VMGP), 396 to 416 (MVGN…LILF), 470 to 490 (VPML…TVTI), 528 to 548 (LIGA…LYGF), and 571 to 591 (FFPI…VIYW).

This sequence belongs to the OXA1/ALB3/YidC family. Type 1 subfamily. As to quaternary structure, interacts with the Sec translocase complex via SecD. Specifically interacts with transmembrane segments of nascent integral membrane proteins during membrane integration.

Its subcellular location is the cell inner membrane. Functionally, required for the insertion and/or proper folding and/or complex formation of integral membrane proteins into the membrane. Involved in integration of membrane proteins that insert both dependently and independently of the Sec translocase complex, as well as at least some lipoproteins. Aids folding of multispanning membrane proteins. This Caulobacter sp. (strain K31) protein is Membrane protein insertase YidC.